Here is a 296-residue protein sequence, read N- to C-terminus: Formamidopyrimidine-DNA glycosylase (296 aa).

Residue proline 2 is the Schiff-base intermediate with DNA of the active site. The active-site Proton donor is the glutamate 3. Lysine 58 (proton donor; for beta-elimination activity) is an active-site residue. Residues histidine 104, arginine 126, and lysine 169 each coordinate DNA. The segment at 260-296 adopts an FPG-type zinc-finger fold; the sequence is SVYDREGQACGTPGCGGTVARIVQAGRSTFYCAACQK. Arginine 286 (proton donor; for delta-elimination activity) is an active-site residue.

It belongs to the FPG family. In terms of assembly, monomer. Zn(2+) serves as cofactor.

It carries out the reaction Hydrolysis of DNA containing ring-opened 7-methylguanine residues, releasing 2,6-diamino-4-hydroxy-5-(N-methyl)formamidopyrimidine.. The catalysed reaction is 2'-deoxyribonucleotide-(2'-deoxyribose 5'-phosphate)-2'-deoxyribonucleotide-DNA = a 3'-end 2'-deoxyribonucleotide-(2,3-dehydro-2,3-deoxyribose 5'-phosphate)-DNA + a 5'-end 5'-phospho-2'-deoxyribonucleoside-DNA + H(+). Involved in base excision repair of DNA damaged by oxidation or by mutagenic agents. Acts as a DNA glycosylase that recognizes and removes damaged bases. Has a preference for oxidized purines, such as 7,8-dihydro-8-oxoguanine (8-oxoG). Has AP (apurinic/apyrimidinic) lyase activity and introduces nicks in the DNA strand. Cleaves the DNA backbone by beta-delta elimination to generate a single-strand break at the site of the removed base with both 3'- and 5'-phosphates. The sequence is that of Formamidopyrimidine-DNA glycosylase from Rhizobium etli (strain ATCC 51251 / DSM 11541 / JCM 21823 / NBRC 15573 / CFN 42).